Here is a 913-residue protein sequence, read N- to C-terminus: Bifunctional uridylyltransferase/uridylyl-removing enzyme (913 aa).

The uridylyltransferase stretch occupies residues 1–358 (MFNCDVTAID…PDEERPKKQP (358 aa)). The segment at 359 to 729 (INARFNQVGD…EHRELALDAV (371 aa)) is uridylyl-removing. Residues 476–592 (VDAHTLFLIR…TLFADLVGNV (117 aa)) form the HD domain. ACT domains lie at 730-815 (QVFV…RIPR) and 838-913 (IMSL…NDRV).

Belongs to the GlnD family. Mg(2+) serves as cofactor.

The catalysed reaction is [protein-PII]-L-tyrosine + UTP = [protein-PII]-uridylyl-L-tyrosine + diphosphate. It carries out the reaction [protein-PII]-uridylyl-L-tyrosine + H2O = [protein-PII]-L-tyrosine + UMP + H(+). Its activity is regulated as follows. Uridylyltransferase (UTase) activity is inhibited by glutamine, while glutamine activates uridylyl-removing (UR) activity. In terms of biological role, modifies, by uridylylation and deuridylylation, the PII regulatory proteins (GlnB and homologs), in response to the nitrogen status of the cell that GlnD senses through the glutamine level. Under low glutamine levels, catalyzes the conversion of the PII proteins and UTP to PII-UMP and PPi, while under higher glutamine levels, GlnD hydrolyzes PII-UMP to PII and UMP (deuridylylation). Thus, controls uridylylation state and activity of the PII proteins, and plays an important role in the regulation of nitrogen assimilation and metabolism. The polypeptide is Bifunctional uridylyltransferase/uridylyl-removing enzyme (Psychrobacter cryohalolentis (strain ATCC BAA-1226 / DSM 17306 / VKM B-2378 / K5)).